A 451-amino-acid chain; its full sequence is Scaffold protein ILK (451 aa).

Met-1 is subject to N-acetylmethionine. 5 ANK repeats span residues 2–30 (DDIF…LNQG), 31–63 (DDHG…INVM), 64–96 (NRGD…INAV), 97–129 (NEHG…VSIC), and 130–174 (NKYG…GTTR). The interval 33–139 (HGFSPLHWAC…NKYGEMPMDK (107 aa)) is interaction with LIMS1. Position 173 is a phosphothreonine (Thr-173). Positions 180–212 (GTLNKHSGIDFKQLNFLAKLNENHSGELWKGRW) are PH-like; mediates interaction with TGFB1I1. Residue Ser-186 is modified to Phosphoserine. The Protein kinase domain maps to 193 to 445 (LNFLAKLNEN…PKFDMIVPIL (253 aa)). ATP contacts are provided by Asn-200, Asn-202, His-203, and Ser-204. Ser-246 bears the Phosphoserine mark. 3 residues coordinate ATP: His-270, Met-272, and Asn-279. Residue Asp-339 coordinates Mg(2+). Lys-341 is a binding site for ATP. The short motif at 363-371 (KKPEDTNRR) is the Nuclear localization signal element. An N6-acetyllysine modification is found at Lys-425.

It belongs to the protein kinase superfamily. TKL Ser/Thr protein kinase family. Component of the heterotrimeric IPP (ILK-PINCH-PARVIN) complex composed of ILK, LIMS1/PINCH and PARVA; the complex binds to F-actin via the C-terminal tail of LIMS1 and the N-terminal region of PARVA, promoting F-actin filament bundling. Formation of the IPP complex is dependent on protein kinase C and precedes integrin-mediated cell adhesion and spreading. ILK also interacts with LIMS2/PINCH2 and with PARVB and PARVG which may substitute for LIMS1 and PARVA in the IPP complex; PARVA and PARVB compete for the same binding site. Interaction with PARVG promotes the establishment of cell polarity required for leukocyte migration. Interacts with the cytoplasmic domain of integrin ITGB1 and may also interact with integrins ITGB2, ITGB3 and/or ITGB5. Interacts probably also with TGFB1I1. Interacts (via ANK repeats) with EPHA1 (via SAM domain); stimulated by EFNA1 but independent of the kinase activity of EPHA1. Interacts with FERMT2. Interacts with LIMD2; leading to activate the protein kinase activity. Interacts with PXN/PAXILLIN (via LD motif 4). Interacts with CCDC25 (via cytoplasmic region); initiating the ILK-PARVB cascade to induce cytoskeleton rearrangement and directional migration of cells. Interacts with IQGAP1; the interaction is required for localization of IQGAP1 to the cell cortex. In terms of processing, phosphorylation by PAK1 modulates ILK subcellular location by promoting its nuclear export.

It is found in the cell junction. Its subcellular location is the focal adhesion. The protein resides in the cell membrane. The protein localises to the cell projection. It localises to the lamellipodium. It is found in the cytoplasm. Its subcellular location is the myofibril. The protein resides in the sarcomere. The protein localises to the nucleus. It localises to the cytoskeleton. It is found in the microtubule organizing center. Its subcellular location is the centrosome. The protein resides in the cell cortex. In terms of biological role, scaffold protein which mediates protein-protein interactions during a range of cellular events including focal adhesion assembly, cell adhesion and cell migration. Regulates integrin-mediated signal transduction by contributing to inside-out integrin activation. Recruits PARVA and LIMS1/PITCH to form the heterotrimeric IPP (ILK-PINCH-PARVIN) complex which binds to F-actin via the C-terminal tail of LIMS1 and the N-terminal region of PARVA, promoting F-actin filament bundling, a process required to generate force for actin cytoskeleton reorganization and subsequent dynamic cell adhesion events such as cell spreading and migration. Binding to PARVA promotes effective assembly of ILK into focal adhesions while PARVA-bound ILK can simultaneously engage integrin-beta cytoplasmic tails to mediate cell adhesion. Plays a role with PARVG in promoting the cell adhesion and spreading of leukocytes. Acts as an upstream effector of both AKT1/PKB and GSK3. Mediates trafficking of caveolae to the cell surface in an ITGB1-dependent manner by promoting the recruitment of IQGAP1 to the cell cortex which cooperates with its effector DIAPH1 to locally stabilize microtubules and allow stable insertion of caveolae into the plasma membrane. Required for the maintenance of mitotic spindle integrity by promoting phosphorylation of TACC3 by AURKA. Associates with chromatin and may act as a negative regulator of transcription when located in the nucleus. The protein is Scaffold protein ILK of Cavia porcellus (Guinea pig).